The following is a 109-amino-acid chain: Large ribosomal subunit protein uL22 (109 aa).

The protein belongs to the universal ribosomal protein uL22 family. In terms of assembly, part of the 50S ribosomal subunit.

This protein binds specifically to 23S rRNA; its binding is stimulated by other ribosomal proteins, e.g. L4, L17, and L20. It is important during the early stages of 50S assembly. It makes multiple contacts with different domains of the 23S rRNA in the assembled 50S subunit and ribosome. Its function is as follows. The globular domain of the protein is located near the polypeptide exit tunnel on the outside of the subunit, while an extended beta-hairpin is found that lines the wall of the exit tunnel in the center of the 70S ribosome. The polypeptide is Large ribosomal subunit protein uL22 (Ralstonia nicotianae (strain ATCC BAA-1114 / GMI1000) (Ralstonia solanacearum)).